A 284-amino-acid chain; its full sequence is Pantothenate synthetase (284 aa).

31–38 (MGNLHAGH) is an ATP binding site. His38 acts as the Proton donor in catalysis. Residue Gln62 participates in (R)-pantoate binding. Gln62 serves as a coordination point for beta-alanine. 150 to 153 (GKKD) serves as a coordination point for ATP. Position 156 (Gln156) interacts with (R)-pantoate. ATP-binding positions include Val179 and 187-190 (MSSR).

This sequence belongs to the pantothenate synthetase family. Homodimer.

Its subcellular location is the cytoplasm. The enzyme catalyses (R)-pantoate + beta-alanine + ATP = (R)-pantothenate + AMP + diphosphate + H(+). Its pathway is cofactor biosynthesis; (R)-pantothenate biosynthesis; (R)-pantothenate from (R)-pantoate and beta-alanine: step 1/1. Catalyzes the condensation of pantoate with beta-alanine in an ATP-dependent reaction via a pantoyl-adenylate intermediate. This Xanthomonas campestris pv. campestris (strain 8004) protein is Pantothenate synthetase.